Reading from the N-terminus, the 519-residue chain is MAEHEQVHEHVRVAVIGSGFGGLGAAVRLRREGITDFVVLERAGSVGGTWRDNSYPGCACDVPSHLYSFSFAPNPEWPRTFSGQEHIRAYLEHVADTFGLRPHLRFDSEVKRMAWDTEQLRWEIETVRGTLTADVVVSATGPLSDPKVPDIPGLDTFPGKVFHSARWDHDYDLAGQRVAMIGTGASAIQIVPSIQPKVDRLTLFQRTPAWVMPRVDRAISGAERALHRALPATTKLRRGLLWGIRELQVQAFTKHPNELGFVEQIAKRNMGAAIKDPALRAKLTPDYRIGCKRILLSSTYYPALAKPNVDVVASGLSEVRGSTLVAADGTEAEADAIVFGTGFHVTDMPIAERVVGADGRTLAETWKGGMEALRGGTAAGFPNFMTVIGPNTGLGNSSMILMIESQLNYLADYLRQLNVLGGRTALDPRPAAVRNWNHRVQERMKRTVWNTGGCTSWYLDASGRNTTVWPGTTAEFRRETRRVDLAEYQVLRPAPAQVGAKAAEADTGADTGADAEVSA.

Residues E41, 49 to 52 (TWRD), D61, Y67, and V110 each bind FAD. 59 to 61 (ACD) is a binding site for NADP(+). NADP(+) is bound by residues 183–189 (TGASAIQ), 206–207 (RT), and 292–293 (KR). M399 is a binding site for FAD. Residues 499-519 (GAKAAEADTGADTGADAEVSA) are disordered.

This sequence belongs to the FAD-binding monooxygenase family. Requires FAD as cofactor.

Catalyzes a Baeyer-Villiger oxidation reaction, i.e. the insertion of an oxygen atom into a carbon-carbon bond adjacent to a carbonyl, which converts ketones to esters or lactones using NADPH and/or NADH as an electron donor. Thus, can convert bicyclo[3.2.0]hept-2-en-6-one into the oxidative lactone products 2-oxabicyclo[3.3.0]oct-6-en-3-one and 3-oxabicyclo[3.3.0]oct-6-en-2-one. Is also able to catalyze the sulfoxidation of methyl phenyl sulfide (thioanisole). The sequence is that of Baeyer-Villiger monooxygenase from Streptomyces coelicolor (strain ATCC BAA-471 / A3(2) / M145).